Here is a 246-residue protein sequence, read N- to C-terminus: Probable transcriptional regulatory protein BVU_3469 (246 aa).

The protein belongs to the TACO1 family.

The protein resides in the cytoplasm. The chain is Probable transcriptional regulatory protein BVU_3469 from Phocaeicola vulgatus (strain ATCC 8482 / DSM 1447 / JCM 5826 / CCUG 4940 / NBRC 14291 / NCTC 11154) (Bacteroides vulgatus).